The primary structure comprises 201 residues: Small ribosomal subunit protein uS5 (201 aa).

Residues 1–28 (MARGEQQRGEGGQRRDRRDRNAPEERVD) are disordered. The S5 DRBM domain occupies 31 to 94 (IVEKLVHINR…EEAKKTMIRV (64 aa)). The segment at 173–201 (QIAAKRGKKVGDILGRRADGASAPEAIEG) is disordered. Residues 181 to 191 (KVGDILGRRAD) show a composition bias toward basic and acidic residues.

The protein belongs to the universal ribosomal protein uS5 family. In terms of assembly, part of the 30S ribosomal subunit. Contacts proteins S4 and S8.

In terms of biological role, with S4 and S12 plays an important role in translational accuracy. Functionally, located at the back of the 30S subunit body where it stabilizes the conformation of the head with respect to the body. The protein is Small ribosomal subunit protein uS5 of Caulobacter vibrioides (strain ATCC 19089 / CIP 103742 / CB 15) (Caulobacter crescentus).